We begin with the raw amino-acid sequence, 234 residues long: MAKLTKRMRVIREKVDATKQYDINEAIALLKELATAKFTESVDVAVNLGIDARKSDQNVRGATVLPHGTGRSVRVAVFTQGANAEAAKAAGAELVGMEDLAEQIKKGEMNFDVVIASPDAMRVVGQLGQVLGPRGLMPNPKVGTVTPNVAEAVKNAKAGQVRYRNDKNGIIHTTIGKVDFDADKLKENLEALLVALKKAKPTQAKGVYIKKVSISTTMGAGVAVDQAGLNASAN.

The protein belongs to the universal ribosomal protein uL1 family. Part of the 50S ribosomal subunit.

Binds directly to 23S rRNA. The L1 stalk is quite mobile in the ribosome, and is involved in E site tRNA release. In terms of biological role, protein L1 is also a translational repressor protein, it controls the translation of the L11 operon by binding to its mRNA. This chain is Large ribosomal subunit protein uL1, found in Klebsiella pneumoniae subsp. pneumoniae (strain ATCC 700721 / MGH 78578).